The sequence spans 106 residues: Malonate decarboxylase acyl carrier protein (106 aa).

O-(phosphoribosyl dephospho-coenzyme A)serine is present on S28.

The protein belongs to the MdcC family. Post-translationally, covalently binds the prosthetic group of malonate decarboxylase.

It is found in the cytoplasm. In terms of biological role, subunit of malonate decarboxylase, it is an acyl carrier protein to which acetyl and malonyl thioester residues are bound via a 2'-(5''-phosphoribosyl)-3'-dephospho-CoA prosthetic group and turn over during the catalytic mechanism. This chain is Malonate decarboxylase acyl carrier protein, found in Stenotrophomonas maltophilia (strain K279a).